Consider the following 636-residue polypeptide: 1-phosphatidylinositol 4,5-bisphosphate phosphodiesterase zeta-1 (636 aa).

In terms of domain architecture, EF-hand spans Cys35–Arg70. In terms of domain architecture, PI-PLC X-box spans Gln155 to Lys299. Active-site residues include His170 and His215. The interval Lys311–Arg338 is disordered. A coiled-coil region spans residues Gln318–Ile345. The segment covering Glu321–Glu336 has biased composition (acidic residues). Positions Leu375 to Arg491 constitute a PI-PLC Y-box domain. A C2 domain is found at Arg491–Ser617.

In terms of assembly, interacts via its C2 domain with PtdIns(3)P and, to a lesser extent, PtdIns(5)P in vitro. Ca(2+) serves as cofactor. In terms of tissue distribution, expressed specifically in testis.

It localises to the nucleus. The protein localises to the cytoplasm. It is found in the perinuclear region. It catalyses the reaction a 1,2-diacyl-sn-glycero-3-phospho-(1D-myo-inositol-4,5-bisphosphate) + H2O = 1D-myo-inositol 1,4,5-trisphosphate + a 1,2-diacyl-sn-glycerol + H(+). In terms of biological role, the production of the second messenger molecules diacylglycerol (DAG) and inositol 1,4,5-trisphosphate (IP3) is mediated by activated phosphatidylinositol-specific phospholipase C enzymes. In vitro, hydrolyzes PtdIns(4,5)P2 in a Ca(2+)-dependent manner. Triggers intracellular Ca(2+) oscillations in oocytes solely during M phase and is involved in inducing oocyte activation and initiating embryonic development up to the blastocyst stage. Is therefore a strong candidate for the egg-activating soluble sperm factor that is transferred from the sperm into the egg cytoplasm following gamete membrane fusion. May exert an inhibitory effect on phospholipase-C-coupled processes that depend on calcium ions and protein kinase C, including CFTR trafficking and function. In Sus scrofa (Pig), this protein is 1-phosphatidylinositol 4,5-bisphosphate phosphodiesterase zeta-1.